The following is a 353-amino-acid chain: Photosystem II D2 protein (353 aa).

Position 2 is an N-acetylthreonine (threonine 2). Phosphothreonine is present on threonine 2. Residues 41 to 61 form a helical membrane-spanning segment; that stretch reads CAYFALGGWFTGTTFVTSWYT. Histidine 118 is a binding site for chlorophyll a. The helical transmembrane segment at 125-141 threads the bilayer; it reads GFMLRQFELARSVQLRP. Residues glutamine 130 and asparagine 143 each contribute to the pheophytin a site. Residues 153–166 form a helical membrane-spanning segment; it reads VFVSVFLIYPLGQS. Histidine 198 is a chlorophyll a binding site. A helical transmembrane segment spans residues 208-228; it reads AALLCAIHGATVENTLFEDGD. A plastoquinone is bound by residues histidine 215 and phenylalanine 262. Histidine 215 lines the Fe cation pocket. Histidine 269 provides a ligand contact to Fe cation. Residues 279-295 form a helical membrane-spanning segment; it reads GLWMSAIGVVGLALNLR.

This sequence belongs to the reaction center PufL/M/PsbA/D family. PSII is composed of 1 copy each of membrane proteins PsbA, PsbB, PsbC, PsbD, PsbE, PsbF, PsbH, PsbI, PsbJ, PsbK, PsbL, PsbM, PsbT, PsbX, PsbY, PsbZ, Psb30/Ycf12, at least 3 peripheral proteins of the oxygen-evolving complex and a large number of cofactors. It forms dimeric complexes. Requires The D1/D2 heterodimer binds P680, chlorophylls that are the primary electron donor of PSII, and subsequent electron acceptors. It shares a non-heme iron and each subunit binds pheophytin, quinone, additional chlorophylls, carotenoids and lipids. There is also a Cl(-1) ion associated with D1 and D2, which is required for oxygen evolution. The PSII complex binds additional chlorophylls, carotenoids and specific lipids. as cofactor.

The protein resides in the plastid. It is found in the chloroplast thylakoid membrane. The catalysed reaction is 2 a plastoquinone + 4 hnu + 2 H2O = 2 a plastoquinol + O2. In terms of biological role, photosystem II (PSII) is a light-driven water:plastoquinone oxidoreductase that uses light energy to abstract electrons from H(2)O, generating O(2) and a proton gradient subsequently used for ATP formation. It consists of a core antenna complex that captures photons, and an electron transfer chain that converts photonic excitation into a charge separation. The D1/D2 (PsbA/PsbD) reaction center heterodimer binds P680, the primary electron donor of PSII as well as several subsequent electron acceptors. D2 is needed for assembly of a stable PSII complex. The polypeptide is Photosystem II D2 protein (Agrostis stolonifera (Creeping bentgrass)).